The following is a 117-amino-acid chain: Probable non-functional T cell receptor gamma variable (117 aa).

A signal peptide spans 1-20 (MRWALAVLLAFLSPASQISS). One can recognise an Ig-like domain in the interval 21 to 117 (NLEGRTKSVT…GFYYCATWDR (97 aa)). Cys41 and Cys112 form a disulfide bridge. N-linked (GlcNAc...) asparagine glycosylation is present at Asn105.

In terms of assembly, gamma-delta TR is a heterodimer composed of a gamma and delta chain; disulfide-linked. The gamma-delta TR is associated with the transmembrane signaling CD3 coreceptor proteins following the stoichiometry: a single gamma-delta TR heterodimer associates with one CD3D-CD3E heterodimer, one CD3G-CD3E heterodimer and one CD247 homodimer forming a stable octameric structure. Upon activation, gamma-delta TR complex associates with FCER1G to initiate intracellular signaling.

It is found in the cell membrane. In terms of biological role, probable non-functional open reading frame (ORF) of V region of the variable domain of T cell receptor (TR) gamma chain. Non-functional ORF generally cannot participate in the synthesis of a productive T cell receptor (TR) chain due to altered V-(D)-J or switch recombination and/or splicing site (at mRNA level) and/or conserved amino acid change (protein level). Gamma-delta TRs recognize a variety of self and foreign non-peptide antigens frequently expressed at the epithelial boundaries between the host and external environment, including endogenous lipids presented by MH-like protein CD1D and phosphoantigens presented by butyrophilin-like molecule BTN3A1. Upon antigen recognition induces rapid, innate-like immune responses involved in pathogen clearance and tissue repair. Binding of gamma-delta TR complex to antigen triggers phosphorylation of immunoreceptor tyrosine-based activation motifs (ITAMs) in the CD3 chains by the LCK and FYN kinases, allowing the recruitment, phosphorylation, and activation of ZAP70 that facilitates phosphorylation of the scaffolding proteins LCP2 and LAT. This lead to the formation of a supramolecular signalosome that recruits the phospholipase PLCG1, resulting in calcium mobilization and ERK activation, ultimately leading to T cell expansion and differentiation into effector cells. Gamma-delta TRs are produced through somatic rearrangement of a limited repertoire of variable (V), diversity (D), and joining (J) genes. The potential diversity of gamma-delta TRs is conferred by the unique ability to rearrange (D) genes in tandem and to utilize all three reading frames. The combinatorial diversity is considerably increased by the sequence exonuclease trimming and random nucleotide (N) region additions which occur during the V-(D)-J rearrangements. The chain is Probable non-functional T cell receptor gamma variable from Homo sapiens (Human).